Reading from the N-terminus, the 233-residue chain is Putative N-acetylmannosamine-6-phosphate 2-epimerase (233 aa).

Belongs to the NanE family.

It carries out the reaction an N-acyl-D-glucosamine 6-phosphate = an N-acyl-D-mannosamine 6-phosphate. Its pathway is amino-sugar metabolism; N-acetylneuraminate degradation; D-fructose 6-phosphate from N-acetylneuraminate: step 3/5. Converts N-acetylmannosamine-6-phosphate (ManNAc-6-P) to N-acetylglucosamine-6-phosphate (GlcNAc-6-P). This is Putative N-acetylmannosamine-6-phosphate 2-epimerase from Yersinia pestis bv. Antiqua (strain Antiqua).